A 1357-amino-acid polypeptide reads, in one-letter code: DNA-directed RNA polymerase subunit beta (1357 aa).

Belongs to the RNA polymerase beta chain family. As to quaternary structure, the RNAP catalytic core consists of 2 alpha, 1 beta, 1 beta' and 1 omega subunit. When a sigma factor is associated with the core the holoenzyme is formed, which can initiate transcription.

The catalysed reaction is RNA(n) + a ribonucleoside 5'-triphosphate = RNA(n+1) + diphosphate. DNA-dependent RNA polymerase catalyzes the transcription of DNA into RNA using the four ribonucleoside triphosphates as substrates. The protein is DNA-directed RNA polymerase subunit beta of Pseudomonas fluorescens (strain ATCC BAA-477 / NRRL B-23932 / Pf-5).